Consider the following 114-residue polypeptide: Amphinase-1 (114 aa).

Residue His-15 is the Proton acceptor of the active site. Intrachain disulfides connect Cys-26/Cys-79, Cys-41/Cys-85, Cys-59/Cys-100, and Cys-97/Cys-114. N-linked (GlcNAc...) asparagine glycosylation occurs at Asn-27. 42–46 contributes to the substrate binding site; sequence KPVNT. N-linked (GlcNAc...) asparagine glycans are attached at residues Asn-67 and Asn-91. Residue His-107 is the Proton donor of the active site.

It belongs to the pancreatic ribonuclease family. Monomer. Post-translationally, there are at least five different forms arising from glycan heterogeneity.

The protein localises to the secreted. In terms of biological role, endonuclease, hydrolyzes highly polymerized RNA, poly(U) and poly(C), and the dinucleotides CpA and UpA. More active towards rCA than rUA or rUG. Has cytotoxic activity against cultured human submaxillary gland carcinoma cells. The chain is Amphinase-1 from Lithobates pipiens (Northern leopard frog).